The following is a 391-amino-acid chain: Formate-dependent phosphoribosylglycinamide formyltransferase (391 aa).

N(1)-(5-phospho-beta-D-ribosyl)glycinamide-binding positions include 18–19 and glutamate 78; that span reads EL. ATP contacts are provided by residues arginine 110, lysine 151, 156 to 161, 191 to 194, and glutamate 199; these read SSGKGQ and EEFI. Residues 115 to 305 form the ATP-grasp domain; it reads DLASKDLKIK…EFELHLRAFL (191 aa). Residues glutamate 264 and glutamate 276 each contribute to the Mg(2+) site. N(1)-(5-phospho-beta-D-ribosyl)glycinamide-binding positions include aspartate 283, lysine 353, and 360-361; that span reads RR.

This sequence belongs to the PurK/PurT family. In terms of assembly, homodimer.

The catalysed reaction is N(1)-(5-phospho-beta-D-ribosyl)glycinamide + formate + ATP = N(2)-formyl-N(1)-(5-phospho-beta-D-ribosyl)glycinamide + ADP + phosphate + H(+). The protein operates within purine metabolism; IMP biosynthesis via de novo pathway; N(2)-formyl-N(1)-(5-phospho-D-ribosyl)glycinamide from N(1)-(5-phospho-D-ribosyl)glycinamide (formate route): step 1/1. In terms of biological role, involved in the de novo purine biosynthesis. Catalyzes the transfer of formate to 5-phospho-ribosyl-glycinamide (GAR), producing 5-phospho-ribosyl-N-formylglycinamide (FGAR). Formate is provided by PurU via hydrolysis of 10-formyl-tetrahydrofolate. The sequence is that of Formate-dependent phosphoribosylglycinamide formyltransferase from Prochlorococcus marinus (strain AS9601).